A 748-amino-acid polypeptide reads, in one-letter code: Ribonucleoprotein PTB-binding 1 (748 aa).

The interval 1–42 (MAADVSVTHRPPLSPEAEAEAETPETVDRRTPEQELPPLDPE) is disordered. Position 2 is an N-acetylalanine (Ala-2). A phosphoserine mark is found at Ser-6 and Ser-14. The residue at position 31 (Thr-31) is a Phosphothreonine. Residues 45 to 60 (RKRLEHTERQFRNRRK) carry the Nuclear localization signal motif. RRM domains follow at residues 59 to 130 (RKIL…LQPT), 132 to 210 (ALLC…WTDA), and 221 to 299 (RCLC…FCAP). The tract at residues 307 to 401 (LAALIAAQAT…QSQSQKKPGI (95 aa)) is interaction with PTBP1. 3 disordered regions span residues 390–505 (QSQS…GEPP), 525–647 (SNLA…PLSH), and 672–731 (KAVG…QHSQ). Thr-469 carries the post-translational modification Phosphothreonine. Phosphoserine occurs at positions 480, 576, 626, and 630. Low complexity predominate over residues 675-685 (GSSPMGSSEGL). A phosphoserine mark is found at Ser-716 and Ser-720. A Nuclear localization signal motif is present at residues 743–746 (KRKR).

In terms of assembly, interacts with PTBP1, RAVER2, VCL and ACTN1. Part of a complex containing RAVER1, VCL and ACTN1. As to expression, ubiquitous. Detected in aorta, brain, gut, heart, kidney, liver, spleen, uterus and skeletal muscle.

The protein localises to the nucleus. It localises to the cytoplasm. In terms of biological role, cooperates with PTBP1 to modulate regulated alternative splicing events. Promotes exon skipping. Cooperates with PTBP1 to modulate switching between mutually exclusive exons during maturation of the TPM1 pre-mRNA. The sequence is that of Ribonucleoprotein PTB-binding 1 (Raver1) from Rattus norvegicus (Rat).